Reading from the N-terminus, the 151-residue chain is MADADVDVGPVQPKKRTFKKFSYRGVDLDALLDMTSEELVKLFHARARRRFQRGLKRQPMALIKKLRKAKREAPSGEKPEPVRTHLRNMIIVPEMIGSIIGVYNGKTFNQVEIKPEMIGHYLAEFSISYKPVKHGRPGIGATHSSRFIPLK.

The protein belongs to the universal ribosomal protein uS19 family.

This is Small ribosomal subunit protein uS19 (RPS15) from Picea mariana (Black spruce).